Reading from the N-terminus, the 276-residue chain is Large ribosomal subunit protein uL2 (276 aa).

Positions 221–276 (RGSAMNPNDHPHGGGEGRAPIGRKSPMTPWGKKARGIKTRDRKKSSNELIIRRRTK) are disordered. The segment covering 252–263 (KKARGIKTRDRK) has biased composition (basic residues).

The protein belongs to the universal ribosomal protein uL2 family. Part of the 50S ribosomal subunit. Forms a bridge to the 30S subunit in the 70S ribosome.

In terms of biological role, one of the primary rRNA binding proteins. Required for association of the 30S and 50S subunits to form the 70S ribosome, for tRNA binding and peptide bond formation. It has been suggested to have peptidyltransferase activity; this is somewhat controversial. Makes several contacts with the 16S rRNA in the 70S ribosome. In Phytoplasma australiense, this protein is Large ribosomal subunit protein uL2.